The primary structure comprises 338 residues: 2-methyl-6-phytyl-1,4-hydroquinone methyltransferase, chloroplastic (338 aa).

The N-terminal 51 residues, 1-51 (MASLMLNGAITFPKGLGSPGSNLHARSIPRPTLLSVTRTSTPRLSVATRCS), are a transit peptide targeting the chloroplast. Topologically, residues 52 to 307 (SSSVSSSRPS…VNNPFSFLGR (256 aa)) are chloroplast intermembrane. The tract at residues 114 to 123 (VVDVGGGTGF) is SAM motif I. Positions 159–172 (CKIVEGDAEDLPFP) are SAM motif II. Positions 200-213 (RVLKIGGKACLIGP) are SAM motif III. Residues 308-328 (FLLGTLAAAWFVLIPIYMWIK) traverse the membrane as a helical segment. Over 329–338 (DQIVPKDQPI) the chain is Stromal.

The protein belongs to the class I-like SAM-binding methyltransferase superfamily. MPBQ/MBSQ MT family.

It localises to the plastid. The protein resides in the chloroplast inner membrane. It catalyses the reaction 2-methyl-6-phytyl-1,4-benzene-1,4-diol + S-adenosyl-L-methionine = 2,3-dimethyl-6-phytylbenzene-1,4-diol + S-adenosyl-L-homocysteine + H(+). The enzyme catalyses 2-methyl-6-(all-trans-nonaprenyl)benzene-1,4-diol + S-adenosyl-L-methionine = plastoquinol-9 + S-adenosyl-L-homocysteine + H(+). It carries out the reaction 6-geranylgeranyl-2-methylbenzene-1,4-diol + S-adenosyl-L-methionine = 6-geranylgeranyl-2,3-dimethylbenzene-1,4-diol + S-adenosyl-L-homocysteine + H(+). Its pathway is cofactor biosynthesis; tocopherol biosynthesis. Functionally, involved in a key methylation step in both tocopherols (vitamin E) and plastoquinone synthesis. Catalyzes the conversion of 2-methyl-6-phytyl-1,4-hydroquinone (MPBQ) to 2,3-dimethyl-6-phytyl-1,4-hydroquinone (DMPQ, a substrate for tocopherol cyclase), and 2-methyl-6-solanyl-1,4-benzoquinone (MSBQ) to plastoquinone. This Arabidopsis thaliana (Mouse-ear cress) protein is 2-methyl-6-phytyl-1,4-hydroquinone methyltransferase, chloroplastic (VTE3).